An 89-amino-acid polypeptide reads, in one-letter code: DNA-directed RNA polymerase subunit Rpo6 (89 aa).

Belongs to the archaeal Rpo6/eukaryotic RPB6 RNA polymerase subunit family. Part of the RNA polymerase complex.

The protein resides in the cytoplasm. It catalyses the reaction RNA(n) + a ribonucleoside 5'-triphosphate = RNA(n+1) + diphosphate. In terms of biological role, DNA-dependent RNA polymerase (RNAP) catalyzes the transcription of DNA into RNA using the four ribonucleoside triphosphates as substrates. This is DNA-directed RNA polymerase subunit Rpo6 from Aeropyrum pernix (strain ATCC 700893 / DSM 11879 / JCM 9820 / NBRC 100138 / K1).